A 156-amino-acid chain; its full sequence is ATP synthase subunit b (156 aa).

A helical transmembrane segment spans residues 7-29 (LLGQAISFLLFVWFCMKFVWPPL).

Belongs to the ATPase B chain family. As to quaternary structure, F-type ATPases have 2 components, F(1) - the catalytic core - and F(0) - the membrane proton channel. F(1) has five subunits: alpha(3), beta(3), gamma(1), delta(1), epsilon(1). F(0) has three main subunits: a(1), b(2) and c(10-14). The alpha and beta chains form an alternating ring which encloses part of the gamma chain. F(1) is attached to F(0) by a central stalk formed by the gamma and epsilon chains, while a peripheral stalk is formed by the delta and b chains.

The protein localises to the cell inner membrane. Functionally, f(1)F(0) ATP synthase produces ATP from ADP in the presence of a proton or sodium gradient. F-type ATPases consist of two structural domains, F(1) containing the extramembraneous catalytic core and F(0) containing the membrane proton channel, linked together by a central stalk and a peripheral stalk. During catalysis, ATP synthesis in the catalytic domain of F(1) is coupled via a rotary mechanism of the central stalk subunits to proton translocation. Component of the F(0) channel, it forms part of the peripheral stalk, linking F(1) to F(0). In Shewanella halifaxensis (strain HAW-EB4), this protein is ATP synthase subunit b.